The following is a 345-amino-acid chain: Ferrochelatase (345 aa).

Residues His-215 and Glu-296 each coordinate Fe cation.

Belongs to the ferrochelatase family.

Its subcellular location is the cytoplasm. It catalyses the reaction heme b + 2 H(+) = protoporphyrin IX + Fe(2+). The protein operates within porphyrin-containing compound metabolism; protoheme biosynthesis; protoheme from protoporphyrin-IX: step 1/1. Catalyzes the ferrous insertion into protoporphyrin IX. This chain is Ferrochelatase, found in Rhodopseudomonas palustris (strain HaA2).